The primary structure comprises 142 residues: Rhinocerosin (142 aa).

The signal sequence occupies residues methionine 1–alanine 16. The propeptide occupies tyrosine 17–arginine 70. A disordered region spans residues leucine 72–lysine 96. Positions glutamine 85–lysine 96 are enriched in polar residues.

Belongs to the coleoptericin family. In terms of tissue distribution, strongly expressed in the fat body and the Malpighian tubules, and weakly expressed in hemocytes and midgut.

The protein resides in the secreted. Functionally, has strong antibacterial activity against E.coli, Streptococcus pyogenes, Staphylococcus aureus but not against Pseudomonas aeruginosa. The protein is Rhinocerosin of Oryctes rhinoceros (Coconut rhinoceros beetle).